Here is a 346-residue protein sequence, read N- to C-terminus: Coproporphyrin III ferrochelatase (346 aa).

Fe-coproporphyrin III contacts are provided by Ser52 and Tyr121. 2 residues coordinate Fe(2+): His181 and Glu264.

This sequence belongs to the ferrochelatase family.

It is found in the cytoplasm. The catalysed reaction is Fe-coproporphyrin III + 2 H(+) = coproporphyrin III + Fe(2+). It participates in porphyrin-containing compound metabolism; protoheme biosynthesis. Involved in coproporphyrin-dependent heme b biosynthesis. Catalyzes the insertion of ferrous iron into coproporphyrin III to form Fe-coproporphyrin III. The chain is Coproporphyrin III ferrochelatase from Mycobacterium sp. (strain JLS).